Consider the following 122-residue polypeptide: Large ribosomal subunit protein uL14 (122 aa).

This sequence belongs to the universal ribosomal protein uL14 family. Part of the 50S ribosomal subunit. Forms a cluster with proteins L3 and L19. In the 70S ribosome, L14 and L19 interact and together make contacts with the 16S rRNA in bridges B5 and B8.

Its function is as follows. Binds to 23S rRNA. Forms part of two intersubunit bridges in the 70S ribosome. The protein is Large ribosomal subunit protein uL14 of Brevibacillus brevis (strain 47 / JCM 6285 / NBRC 100599).